The sequence spans 425 residues: Glutamyl-tRNA reductase (425 aa).

Substrate is bound by residues 49–52 (TCNR), Ser107, 112–114 (EPQ), and Gln118. Cys50 functions as the Nucleophile in the catalytic mechanism. 187–192 (GAGETI) serves as a coordination point for NADP(+).

Belongs to the glutamyl-tRNA reductase family. In terms of assembly, homodimer.

The catalysed reaction is (S)-4-amino-5-oxopentanoate + tRNA(Glu) + NADP(+) = L-glutamyl-tRNA(Glu) + NADPH + H(+). The protein operates within porphyrin-containing compound metabolism; protoporphyrin-IX biosynthesis; 5-aminolevulinate from L-glutamyl-tRNA(Glu): step 1/2. Catalyzes the NADPH-dependent reduction of glutamyl-tRNA(Glu) to glutamate 1-semialdehyde (GSA). The protein is Glutamyl-tRNA reductase of Pseudomonas entomophila (strain L48).